The following is a 317-amino-acid chain: Transaldolase (317 aa).

Catalysis depends on K126, which acts as the Schiff-base intermediate with substrate.

Belongs to the transaldolase family. Type 1 subfamily. As to quaternary structure, homodimer.

It localises to the cytoplasm. The catalysed reaction is D-sedoheptulose 7-phosphate + D-glyceraldehyde 3-phosphate = D-erythrose 4-phosphate + beta-D-fructose 6-phosphate. It participates in carbohydrate degradation; pentose phosphate pathway; D-glyceraldehyde 3-phosphate and beta-D-fructose 6-phosphate from D-ribose 5-phosphate and D-xylulose 5-phosphate (non-oxidative stage): step 2/3. Transaldolase is important for the balance of metabolites in the pentose-phosphate pathway. The polypeptide is Transaldolase (Burkholderia orbicola (strain AU 1054)).